The primary structure comprises 352 residues: NAD(P)H oxidoreductase RTN4IP1, mitochondrial (352 aa).

The Enoyl reductase (ER) domain occupies 11–348 (ESLDLLEYKT…NSNSNGKIII (338 aa)). Residues Val-165, Tyr-206, Ala-296, and Phe-298 each contribute to the NADPH site.

The protein belongs to the zinc-containing alcohol dehydrogenase family. Quinone oxidoreductase subfamily.

Its subcellular location is the mitochondrion matrix. The catalysed reaction is a quinone + NADH + H(+) = a quinol + NAD(+). It carries out the reaction a quinone + NADPH + H(+) = a quinol + NADP(+). It functions in the pathway cofactor biosynthesis; ubiquinone biosynthesis. NAD(P)H oxidoreductase involved in the ubiquinone biosynthetic pathway. Required for the O-methyltransferase activity of coq3. This chain is NAD(P)H oxidoreductase RTN4IP1, mitochondrial (rtn4ip1), found in Dictyostelium discoideum (Social amoeba).